The following is a 308-amino-acid chain: Uricase-2 (308 aa).

Catalysis depends on charge relay system residues lysine 17 and threonine 63. The urate site is built by threonine 63, aspartate 64, phenylalanine 165, arginine 182, valine 237, glutamine 238, and asparagine 264. Histidine 266 (charge relay system) is an active-site residue. Positions 306–308 match the Microbody targeting signal motif; it reads SKL.

This sequence belongs to the uricase family. As to quaternary structure, homotetramer. Expressed predominantly in the uninfected cells of the central tissue of the root nodule. Also expressed in the nodule parenchyma cells and vascular tissue, in the roots, stems and leaves of uninfected adult plants, and in the cotyledons, roots and hypocotyls of developing seedlings. Localized to the metaxylem parenchyma cells and phloem fibers of developing roots.

The protein resides in the peroxisome. The enzyme catalyses urate + O2 + H2O = 5-hydroxyisourate + H2O2. It functions in the pathway purine metabolism; urate degradation; (S)-allantoin from urate: step 1/3. Functionally, catalyzes the oxidation of uric acid to 5-hydroxyisourate, which is further processed to form (S)-allantoin. The protein is Uricase-2 (URIII) of Phaseolus vulgaris (Kidney bean).